The sequence spans 341 residues: UDP-3-O-acylglucosamine N-acyltransferase (341 aa).

Catalysis depends on His-241, which acts as the Proton acceptor.

This sequence belongs to the transferase hexapeptide repeat family. LpxD subfamily. In terms of assembly, homotrimer.

It catalyses the reaction a UDP-3-O-[(3R)-3-hydroxyacyl]-alpha-D-glucosamine + a (3R)-hydroxyacyl-[ACP] = a UDP-2-N,3-O-bis[(3R)-3-hydroxyacyl]-alpha-D-glucosamine + holo-[ACP] + H(+). The protein operates within bacterial outer membrane biogenesis; LPS lipid A biosynthesis. Its function is as follows. Catalyzes the N-acylation of UDP-3-O-acylglucosamine using 3-hydroxyacyl-ACP as the acyl donor. Is involved in the biosynthesis of lipid A, a phosphorylated glycolipid that anchors the lipopolysaccharide to the outer membrane of the cell. The chain is UDP-3-O-acylglucosamine N-acyltransferase from Histophilus somni (strain 129Pt) (Haemophilus somnus).